Here is a 399-residue protein sequence, read N- to C-terminus: Serine palmitoyltransferase (399 aa).

Pyridoxal 5'-phosphate-binding positions include 113–114 (GF), His213, Thr241, and Ser243. Lys244 bears the N6-(pyridoxal phosphate)lysine mark.

Belongs to the class-II pyridoxal-phosphate-dependent aminotransferase family. In terms of assembly, homodimer. Pyridoxal 5'-phosphate serves as cofactor.

The protein localises to the cytoplasm. It is found in the cell inner membrane. It catalyses the reaction L-serine + hexadecanoyl-CoA + H(+) = 3-oxosphinganine + CO2 + CoA. The protein operates within lipid metabolism; sphingolipid metabolism. Catalyzes the condensation of L-serine with palmitoyl-CoA (hexadecanoyl-CoA) to produce 3-oxosphinganine. Exhibits a broad substrate specificity concerning the chain length and the degree of unsaturation of acyl-CoA. The protein is Serine palmitoyltransferase of Sphingobacterium multivorum.